Reading from the N-terminus, the 691-residue chain is DNA-directed RNA polymerase subunit beta' (691 aa).

Zn(2+) is bound by residues C76, C78, C94, and C97. D496, D498, and D500 together coordinate Mg(2+).

Belongs to the RNA polymerase beta' chain family. RpoC1 subfamily. It depends on Mg(2+) as a cofactor. The cofactor is Zn(2+).

The protein resides in the plastid. It catalyses the reaction RNA(n) + a ribonucleoside 5'-triphosphate = RNA(n+1) + diphosphate. DNA-dependent RNA polymerase catalyzes the transcription of DNA into RNA using the four ribonucleoside triphosphates as substrates. The sequence is that of DNA-directed RNA polymerase subunit beta' from Cuscuta exaltata (Tall dodder).